A 290-amino-acid chain; its full sequence is Bifunctional protein FolD (290 aa).

NADP(+) contacts are provided by residues 169 to 171 (GAS), isoleucine 194, and isoleucine 235.

This sequence belongs to the tetrahydrofolate dehydrogenase/cyclohydrolase family. As to quaternary structure, homodimer.

It catalyses the reaction (6R)-5,10-methylene-5,6,7,8-tetrahydrofolate + NADP(+) = (6R)-5,10-methenyltetrahydrofolate + NADPH. It carries out the reaction (6R)-5,10-methenyltetrahydrofolate + H2O = (6R)-10-formyltetrahydrofolate + H(+). Its pathway is one-carbon metabolism; tetrahydrofolate interconversion. Catalyzes the oxidation of 5,10-methylenetetrahydrofolate to 5,10-methenyltetrahydrofolate and then the hydrolysis of 5,10-methenyltetrahydrofolate to 10-formyltetrahydrofolate. In Helicobacter pylori (strain HPAG1), this protein is Bifunctional protein FolD.